The sequence spans 421 residues: UDP-N-acetylglucosamine 1-carboxyvinyltransferase (421 aa).

22-23 (KN) lines the phosphoenolpyruvate pocket. A UDP-N-acetyl-alpha-D-glucosamine-binding site is contributed by R93. Residue C117 is the Proton donor of the active site. C117 is subject to 2-(S-cysteinyl)pyruvic acid O-phosphothioketal. Residues 122–126 (RPVDL), D308, and V330 each bind UDP-N-acetyl-alpha-D-glucosamine.

It belongs to the EPSP synthase family. MurA subfamily.

It is found in the cytoplasm. It catalyses the reaction phosphoenolpyruvate + UDP-N-acetyl-alpha-D-glucosamine = UDP-N-acetyl-3-O-(1-carboxyvinyl)-alpha-D-glucosamine + phosphate. Its pathway is cell wall biogenesis; peptidoglycan biosynthesis. Functionally, cell wall formation. Adds enolpyruvyl to UDP-N-acetylglucosamine. The polypeptide is UDP-N-acetylglucosamine 1-carboxyvinyltransferase (Stutzerimonas stutzeri (strain A1501) (Pseudomonas stutzeri)).